Reading from the N-terminus, the 527-residue chain is Flagellar radial spoke protein 5 (527 aa).

The segment at 1–22 is disordered; the sequence is MSEPGEEPVAAPAGPAPDPVLN. Residues 101–153 adopt a coiled-coil conformation; that stretch reads RKWNELTIQAKQLEQEVAGLKGPDAEAKQAELENVKVQIADAEAAVAEVKQSF. An asymmetric dimethylarginine mark is found at Arg191 and Arg366.

Belongs to the aldo/keto reductase family. In terms of processing, asymmetrically dimethylated at Arg-191 and Arg-366 during flagellum resorption. Probably methylated by PRMT1.

Its subcellular location is the cytoplasm. It localises to the cytoskeleton. The protein localises to the flagellum axoneme. In terms of biological role, flagellar radial spokes contribute to the regulation of dynein arm activity and thus the pattern of flagellar bending. They consist of a thin stalk, which is attached to the a subfiber of the outer doublet microtubule, and a bulbous head, which is attached to the stalk and appears to interact with the projections from the central pair of microtubules. The chain is Flagellar radial spoke protein 5 from Chlamydomonas reinhardtii (Chlamydomonas smithii).